Here is a 130-residue protein sequence, read N- to C-terminus: L-ectoine synthase (130 aa).

This sequence belongs to the ectoine synthase family.

The catalysed reaction is (2S)-4-acetamido-2-aminobutanoate = L-ectoine + H2O. It functions in the pathway amine and polyamine biosynthesis; ectoine biosynthesis; L-ectoine from L-aspartate 4-semialdehyde: step 3/3. In terms of biological role, catalyzes the circularization of gamma-N-acetyl-alpha,gamma-diaminobutyric acid (ADABA) to ectoine (1,4,5,6-tetrahydro-2-methyl-4-pyrimidine carboxylic acid), which is an excellent osmoprotectant. The chain is L-ectoine synthase from Mycobacteroides abscessus (strain ATCC 19977 / DSM 44196 / CCUG 20993 / CIP 104536 / JCM 13569 / NCTC 13031 / TMC 1543 / L948) (Mycobacterium abscessus).